The following is a 398-amino-acid chain: Phosphomevalonate dehydratase large subunit (398 aa).

Residues glycine 48, valine 49, serine 50, asparagine 76, and proline 77 each contribute to the (R)-5-phosphomevalonate site. Residue cysteine 116 participates in [4Fe-4S] cluster binding. The (R)-5-phosphomevalonate site is built by glutamate 136 and serine 137. 2 residues coordinate [4Fe-4S] cluster: cysteine 287 and cysteine 342. (R)-5-phosphomevalonate is bound at residue lysine 361.

It belongs to the AcnX type II large subunit family. In terms of assembly, heterodimer composed of a large subunit (PMDh-L) and a small subunit (PMDh-S). Requires [4Fe-4S] cluster as cofactor.

The enzyme catalyses (R)-5-phosphomevalonate = (2E)-3-methyl-5-phosphooxypent-2-enoate + H2O. It participates in isoprenoid biosynthesis; isopentenyl diphosphate biosynthesis via mevalonate pathway. Its function is as follows. Component of a hydro-lyase that catalyzes the dehydration of mevalonate 5-phosphate (MVA5P) to form trans-anhydromevalonate 5-phosphate (tAHMP). Involved in the archaeal mevalonate (MVA) pathway, which provides fundamental precursors for isoprenoid biosynthesis, such as isopentenyl diphosphate (IPP) and dimethylallyl diphosphate (DMAPP). This chain is Phosphomevalonate dehydratase large subunit, found in Methanosarcina mazei (strain ATCC BAA-159 / DSM 3647 / Goe1 / Go1 / JCM 11833 / OCM 88) (Methanosarcina frisia).